Consider the following 155-residue polypeptide: Pathogenesis-related protein A (155 aa).

The protein belongs to the BetVI family.

This Petroselinum crispum (Parsley) protein is Pathogenesis-related protein A (PCPR1-1).